A 330-amino-acid chain; its full sequence is Phosphate acyltransferase (330 aa).

This sequence belongs to the PlsX family. As to quaternary structure, homodimer. Probably interacts with PlsY.

It localises to the cytoplasm. The catalysed reaction is a fatty acyl-[ACP] + phosphate = an acyl phosphate + holo-[ACP]. The protein operates within lipid metabolism; phospholipid metabolism. Functionally, catalyzes the reversible formation of acyl-phosphate (acyl-PO(4)) from acyl-[acyl-carrier-protein] (acyl-ACP). This enzyme utilizes acyl-ACP as fatty acyl donor, but not acyl-CoA. The polypeptide is Phosphate acyltransferase (Bacillus anthracis (strain A0248)).